The primary structure comprises 685 residues: Putative mannosyltransferase YycA (685 aa).

Transmembrane regions (helical) follow at residues 6-26 (FDAA…YHIW), 68-88 (VLWI…SVII), 109-129 (FGVG…IAVA), 154-174 (AVKQ…GLAF), 176-196 (MKMM…LIAS), and 204-224 (IGSL…WAIA). The tract at residues 269–347 (MNAAGGGNMQ…GGGGGKSVNM (79 aa)) is disordered. Over residues 277 to 286 (MQNQDNMQAP) the composition is skewed to polar residues. Over residues 287–303 (NGNGSSFSQNGNQSFGN) the composition is skewed to low complexity. A compositionally biased stretch (gly residues) spans 318–343 (LNGGGGTPPTGGNGPGNGGPGGGGGK). 7 consecutive transmembrane segments (helical) span residues 363–383 (LSGQ…GAII), 399–419 (TLFW…AGFF), 422–442 (YYLI…WYTM), 455–475 (YLLP…LSAY), 479–499 (IGSV…LALL), 513–533 (IISL…PLLY), and 573–593 (TGEE…YIIY). A disordered region spans residues 652–685 (TSDEYSGSSSSTNSVQGMRRGPGGESQQTLYLVE). The span at 654–665 (DEYSGSSSSTNS) shows a compositional bias: low complexity. A compositionally biased stretch (polar residues) spans 676–685 (ESQQTLYLVE).

This sequence belongs to the glycosyltransferase 39 family.

Its subcellular location is the cell membrane. This Bacillus subtilis (strain 168) protein is Putative mannosyltransferase YycA (yycA).